The following is a 221-amino-acid chain: Sugar transporter SWEET1 (221 aa).

7 consecutive transmembrane segments (helical) span residues 3–23 (AGGFLDSLIYGACVVFTLGMF), 42–62 (VQFLPFLTTEVNNLGWLSYGA), 68–88 (ILIVVNTVGAALQTLYILAYL), 96–116 (VVLLQTATLLGVLLLGYGYFW), 129–149 (LGLFCSVFTISMYLSPLADLA), 160–180 (LSYPLTIATLLTSASWCLYGF), and 186–206 (YIMVSNFPGIVTSFIRFWLFW). A MtN3/slv 1 domain is found at 10–94 (LIYGACVVFT…LAYLHYCPRK (85 aa)). Positions 127-212 (QQLGLFCSVF…WLFWKYPQEQ (86 aa)) constitute a MtN3/slv 2 domain. The segment at 149-221 (AKVIQTKSTQ…QDRNYWLLQT (73 aa)) is mediates interaction with TRPV2.

This sequence belongs to the SWEET sugar transporter family. In terms of assembly, interacts with TRPV2; the interaction probably occurs intracellularly and depends on TRPV2 N-glycosylation. As to expression, ubiquitously expressed with highest expression in oviduct, epididymis and intestine.

The protein localises to the golgi apparatus membrane. Its subcellular location is the cell membrane. In terms of biological role, mediates sugar transport across membranes. May stimulate V(D)J recombination by the activation of RAG1. The polypeptide is Sugar transporter SWEET1 (SLC50A1) (Homo sapiens (Human)).